We begin with the raw amino-acid sequence, 598 residues long: MNNIRNFAIIAHIDHGKSTLADRLIEECNGLEAREMINQILDSMDIERERGITIKAQTVKLNYTANDGNQYCLNLMDTPGHVDFSYEVSRSLAACEGSLLVVDSSQGVEAQTLANVYKAIDNNHEIIVVLNKVDLPAADPEKVKLQVEEVIGIDASESVLISAKTGLGIKDVLEAIVAKLPAPQGDVNAPLQAILVDSWYDTYLGVVILVRVKNGVLKKGMKIVMMSNNATYQIDNIGIFTPKKVMTGELSAGEVGFITASMKEVADCKVGDTITEEKRPCSEALPGFKEVHPVVFCSIFPHKTDDFKYLREALEKLHLNDASFTFEAETSNALGYGFRCGFLGMLHLEVIQERLEREFDLDLTATAPSVIYRVTTRSGEILNIHNPSDMPDPTKIEIVEEPWITATIMVPDQYLGEILSLCEERRGEQEDLSYIGNTTTALLRYKLPLSEVVFDFYDRLKSISKGYASLDWEISSYLVSQIDKLSFLINGEPVDALACIVHKSRAEKRGREICARLKDLIPRQQYKIAIQAAVGGKIIARETINPYRKDVTAKLYGGDVTRRMKLLEKQKKGKKRLHSIGNVNIPQNAFIQALKISD.

The 183-residue stretch at 2 to 184 (NNIRNFAIIA…AIVAKLPAPQ (183 aa)) folds into the tr-type G domain. GTP-binding positions include 14–19 (DHGKST) and 131–134 (NKVD).

The protein belongs to the TRAFAC class translation factor GTPase superfamily. Classic translation factor GTPase family. LepA subfamily.

It is found in the cell membrane. It catalyses the reaction GTP + H2O = GDP + phosphate + H(+). Functionally, required for accurate and efficient protein synthesis under certain stress conditions. May act as a fidelity factor of the translation reaction, by catalyzing a one-codon backward translocation of tRNAs on improperly translocated ribosomes. Back-translocation proceeds from a post-translocation (POST) complex to a pre-translocation (PRE) complex, thus giving elongation factor G a second chance to translocate the tRNAs correctly. Binds to ribosomes in a GTP-dependent manner. The sequence is that of Elongation factor 4 from Wolbachia sp. subsp. Drosophila simulans (strain wRi).